The following is a 325-amino-acid chain: dITP/XTP pyrophosphatase (325 aa).

Positions 1–128 (MKEKIYEYKD…KKVSELGDTI (128 aa)) are unknown. Positions 129 to 324 (LIATRNEGKT…MEVFPAWQNA (196 aa)) are NTP pyrophosphatase. 132–137 (TRNEGK) contacts substrate. Positions 165 and 194 each coordinate Mg(2+). D194 serves as the catalytic Proton acceptor. Residues S195, 278–281 (FGYD), K301, and 306–307 (HR) contribute to the substrate site.

The protein belongs to the HAM1 NTPase family. As to quaternary structure, homodimer. Mg(2+) is required as a cofactor.

The catalysed reaction is XTP + H2O = XMP + diphosphate + H(+). The enzyme catalyses dITP + H2O = dIMP + diphosphate + H(+). It catalyses the reaction ITP + H2O = IMP + diphosphate + H(+). Its function is as follows. Pyrophosphatase that catalyzes the hydrolysis of nucleoside triphosphates to their monophosphate derivatives, with a high preference for the non-canonical purine nucleotides XTP (xanthosine triphosphate), dITP (deoxyinosine triphosphate) and ITP. Seems to function as a house-cleaning enzyme that removes non-canonical purine nucleotides from the nucleotide pool, thus preventing their incorporation into DNA/RNA and avoiding chromosomal lesions. This chain is dITP/XTP pyrophosphatase, found in Streptococcus mutans serotype c (strain ATCC 700610 / UA159).